Reading from the N-terminus, the 156-residue chain is MNFNATLIGQTVAFIIFVWFCMKFVWPPLMNAIEARQKRIADGLADADRAVKDLELAQAKATDQLKEAKATANEIIEQANKRKAQIVEEAKAEADAERAKIIAQGKAEIEAERNRVKEDLRKQVATLAIMGAEKILERSIDPAAHSDIVNKLVAEI.

A helical transmembrane segment spans residues 7–27; the sequence is LIGQTVAFIIFVWFCMKFVWP.

The protein belongs to the ATPase B chain family. As to quaternary structure, F-type ATPases have 2 components, F(1) - the catalytic core - and F(0) - the membrane proton channel. F(1) has five subunits: alpha(3), beta(3), gamma(1), delta(1), epsilon(1). F(0) has three main subunits: a(1), b(2) and c(10-14). The alpha and beta chains form an alternating ring which encloses part of the gamma chain. F(1) is attached to F(0) by a central stalk formed by the gamma and epsilon chains, while a peripheral stalk is formed by the delta and b chains.

The protein localises to the cell inner membrane. Functionally, f(1)F(0) ATP synthase produces ATP from ADP in the presence of a proton or sodium gradient. F-type ATPases consist of two structural domains, F(1) containing the extramembraneous catalytic core and F(0) containing the membrane proton channel, linked together by a central stalk and a peripheral stalk. During catalysis, ATP synthesis in the catalytic domain of F(1) is coupled via a rotary mechanism of the central stalk subunits to proton translocation. In terms of biological role, component of the F(0) channel, it forms part of the peripheral stalk, linking F(1) to F(0). The chain is ATP synthase subunit b from Shewanella sp. (strain ANA-3).